A 314-amino-acid chain; its full sequence is Nitrilase 2 (314 aa).

The CN hydrolase domain maps to 7-269 (VTLGVAQAAP…ETLITARVST (263 aa)). Glutamate 47 functions as the Proton acceptor in the catalytic mechanism. The Proton donor role is filled by lysine 132. Residue cysteine 166 is the Nucleophile of the active site.

Belongs to the carbon-nitrogen hydrolase superfamily. Nitrilase family.

The enzyme catalyses a nitrile + 2 H2O = a carboxylate + NH4(+). Nitrilases catalyze the mild hydrolytic conversion of organonitriles directly to the corresponding carboxylic acids. Catalyzes the production of aryllactic acid derivatives. Mediates the hydrolysis of cyanohydrin to (S)-phenyllactic acid. This is Nitrilase 2 from Unknown prokaryotic organism.